A 72-amino-acid polypeptide reads, in one-letter code: Translation initiation factor IF-1 (72 aa).

The 72-residue stretch at 1–72 (MSKSDYIELE…TKGRIIFRHK (72 aa)) folds into the S1-like domain.

This sequence belongs to the IF-1 family. In terms of assembly, component of the 30S ribosomal translation pre-initiation complex which assembles on the 30S ribosome in the order IF-2 and IF-3, IF-1 and N-formylmethionyl-tRNA(fMet); mRNA recruitment can occur at any time during PIC assembly.

The protein localises to the cytoplasm. Its function is as follows. One of the essential components for the initiation of protein synthesis. Stabilizes the binding of IF-2 and IF-3 on the 30S subunit to which N-formylmethionyl-tRNA(fMet) subsequently binds. Helps modulate mRNA selection, yielding the 30S pre-initiation complex (PIC). Upon addition of the 50S ribosomal subunit IF-1, IF-2 and IF-3 are released leaving the mature 70S translation initiation complex. In Ruthia magnifica subsp. Calyptogena magnifica, this protein is Translation initiation factor IF-1.